The sequence spans 190 residues: Protein GrpE (190 aa).

A compositionally biased stretch (polar residues) spans 1-18 (MTETPNTSSEEIQTSEPS). Residues 1–21 (MTETPNTSSEEIQTSEPSPDN) are disordered.

This sequence belongs to the GrpE family. As to quaternary structure, homodimer.

Its subcellular location is the cytoplasm. Its function is as follows. Participates actively in the response to hyperosmotic and heat shock by preventing the aggregation of stress-denatured proteins, in association with DnaK and GrpE. It is the nucleotide exchange factor for DnaK and may function as a thermosensor. Unfolded proteins bind initially to DnaJ; upon interaction with the DnaJ-bound protein, DnaK hydrolyzes its bound ATP, resulting in the formation of a stable complex. GrpE releases ADP from DnaK; ATP binding to DnaK triggers the release of the substrate protein, thus completing the reaction cycle. Several rounds of ATP-dependent interactions between DnaJ, DnaK and GrpE are required for fully efficient folding. In Chlamydia trachomatis serovar L2b (strain UCH-1/proctitis), this protein is Protein GrpE.